A 74-amino-acid polypeptide reads, in one-letter code: Small ribosomal subunit protein uS15 (74 aa).

Belongs to the universal ribosomal protein uS15 family. Part of the 30S ribosomal subunit. Forms a bridge to the 50S subunit in the 70S ribosome, contacting the 23S rRNA.

Functionally, one of the primary rRNA binding proteins, it binds directly to 16S rRNA where it helps nucleate assembly of the platform of the 30S subunit by binding and bridging several RNA helices of the 16S rRNA. In terms of biological role, forms an intersubunit bridge (bridge B4) with the 23S rRNA of the 50S subunit in the ribosome. This chain is Small ribosomal subunit protein uS15, found in Onion yellows phytoplasma (strain OY-M).